An 81-amino-acid polypeptide reads, in one-letter code: uncharacterized protein (81 aa).

This is an uncharacterized protein from Carnobacterium maltaromaticum (Carnobacterium piscicola).